Consider the following 754-residue polypeptide: 5-methyltetrahydropteroyltriglutamate--homocysteine methyltransferase (754 aa).

Residues 15 to 18 and Lys-114 each bind 5-methyltetrahydropteroyltri-L-glutamate; that span reads RELK. Residues 430–432 and Glu-483 each bind L-homocysteine; that span reads IGS. Residues 430-432 and Glu-483 contribute to the L-methionine site; that span reads IGS. 5-methyltetrahydropteroyltri-L-glutamate contacts are provided by residues 514 to 515 and Trp-560; that span reads RC. Asp-598 contacts L-homocysteine. Position 598 (Asp-598) interacts with L-methionine. 5-methyltetrahydropteroyltri-L-glutamate is bound at residue Glu-604. The Zn(2+) site is built by His-641, Cys-643, and Glu-665. His-694 (proton donor) is an active-site residue. A Zn(2+)-binding site is contributed by Cys-726.

This sequence belongs to the vitamin-B12 independent methionine synthase family. It depends on Zn(2+) as a cofactor.

The catalysed reaction is 5-methyltetrahydropteroyltri-L-glutamate + L-homocysteine = tetrahydropteroyltri-L-glutamate + L-methionine. Its pathway is amino-acid biosynthesis; L-methionine biosynthesis via de novo pathway; L-methionine from L-homocysteine (MetE route): step 1/1. In terms of biological role, catalyzes the transfer of a methyl group from 5-methyltetrahydrofolate to homocysteine resulting in methionine formation. This Campylobacter jejuni subsp. jejuni serotype O:23/36 (strain 81-176) protein is 5-methyltetrahydropteroyltriglutamate--homocysteine methyltransferase.